Here is a 131-residue protein sequence, read N- to C-terminus: Small ribosomal subunit protein eS6 (131 aa).

This sequence belongs to the eukaryotic ribosomal protein eS6 family.

The sequence is that of Small ribosomal subunit protein eS6 from Halobacterium salinarum (strain ATCC 29341 / DSM 671 / R1).